The chain runs to 584 residues: Actin-binding protein IPP (584 aa).

Residues 37–104 (CDVQLQVGQE…IYTGIVNIGV (68 aa)) enclose the BTB domain. 6 Kelch repeats span residues 289–343 (YLYA…VLGG), 344–390 (MVYA…VCYG), 391–437 (AIYA…EMQG), 439–485 (IYVI…ALND), 487–533 (IYSV…AVNG), and 535–583 (LYVS…GVAV).

The protein localises to the cytoplasm. The protein resides in the cytoskeleton. Its function is as follows. May play a role in organizing the actin cytoskeleton. This is Actin-binding protein IPP (IPP) from Homo sapiens (Human).